The primary structure comprises 106 residues: Diptericin A (106 aa).

The signal sequence occupies residues Met-1 to Ala-19. Residues Tyr-20–Pro-23 constitute a propeptide, removed by a dipeptidylpeptidase.

It belongs to the attacin/sarcotoxin-2 family.

It localises to the secreted. Its function is as follows. Antimicrobial peptide required to resist Gram-negative bacterial infections, regulated by Dredd. The chain is Diptericin A from Drosophila melanogaster (Fruit fly).